The primary structure comprises 632 residues: 1-deoxy-D-xylulose-5-phosphate synthase (632 aa).

The interval 1 to 25 (MPTTFHEIPRKRPTTPLLDRANTPD) is disordered. Thiamine diphosphate contacts are provided by residues H87 and 128 to 130 (GHS). Mg(2+) is bound at residue D159. Thiamine diphosphate-binding positions include 160–161 (GA), N188, F295, and E378. N188 serves as a coordination point for Mg(2+).

It belongs to the transketolase family. DXPS subfamily. Homodimer. It depends on Mg(2+) as a cofactor. Thiamine diphosphate serves as cofactor.

The enzyme catalyses D-glyceraldehyde 3-phosphate + pyruvate + H(+) = 1-deoxy-D-xylulose 5-phosphate + CO2. It functions in the pathway metabolic intermediate biosynthesis; 1-deoxy-D-xylulose 5-phosphate biosynthesis; 1-deoxy-D-xylulose 5-phosphate from D-glyceraldehyde 3-phosphate and pyruvate: step 1/1. Functionally, catalyzes the acyloin condensation reaction between C atoms 2 and 3 of pyruvate and glyceraldehyde 3-phosphate to yield 1-deoxy-D-xylulose-5-phosphate (DXP). The sequence is that of 1-deoxy-D-xylulose-5-phosphate synthase from Pseudomonas fluorescens (strain Pf0-1).